Here is a 341-residue protein sequence, read N- to C-terminus: Sulfate/thiosulfate import ATP-binding protein CysA 2 (341 aa).

An ABC transporter domain is found at 3 to 235 (IRLENVVKTF…PNSSFVMRFL (233 aa)). Residue 35–42 (GPSGSGKT) participates in ATP binding.

Belongs to the ABC transporter superfamily. Sulfate/tungstate importer (TC 3.A.1.6) family. In terms of assembly, the complex is composed of two ATP-binding proteins (CysA), two transmembrane proteins (CysT and CysW) and a solute-binding protein (CysP).

It localises to the cell inner membrane. It carries out the reaction sulfate(out) + ATP + H2O = sulfate(in) + ADP + phosphate + H(+). The catalysed reaction is thiosulfate(out) + ATP + H2O = thiosulfate(in) + ADP + phosphate + H(+). Part of the ABC transporter complex CysAWTP involved in sulfate/thiosulfate import. Responsible for energy coupling to the transport system. The polypeptide is Sulfate/thiosulfate import ATP-binding protein CysA 2 (Agrobacterium fabrum (strain C58 / ATCC 33970) (Agrobacterium tumefaciens (strain C58))).